The chain runs to 153 residues: Ribosome maturation factor RimP (153 aa).

It belongs to the RimP family.

Its subcellular location is the cytoplasm. Its function is as follows. Required for maturation of 30S ribosomal subunits. The chain is Ribosome maturation factor RimP from Burkholderia mallei (strain NCTC 10229).